The primary structure comprises 489 residues: Hyaluronoglucuronidase (489 aa).

The active-site Proton donor is E176. E290 (nucleophile) is an active-site residue.

Belongs to the glycosyl hydrolase 79 family.

The enzyme catalyses Random hydrolysis of (1-&gt;3)-linkages between beta-D-glucuronate and N-acetyl-D-glucosamine residues in hyaluronate.. Hyaluronidase activity is inhibited by Mn(2+), Cu(2+) and Fe(3+). In terms of biological role, hyaluronidase that mediates hydrolysis of (1-&gt;3)-linkages between beta-D-glucuronate and N-acetyl-D-glucosamine residues in hyaluronate. Very specific to hyaluronate: not able to hydrolyze chitin, heparin or chondroitin sulfate. The chain is Hyaluronoglucuronidase from Hirudo nipponia (Korean blood-sucking leech).